The following is a 191-amino-acid chain: Lipopolysaccharide export system protein LptC (191 aa).

Residues 7–25 (WVIIVLSLAVLVMIGINMA) form a helical membrane-spanning segment.

The protein belongs to the LptC family. In terms of assembly, component of the lipopolysaccharide transport and assembly complex. Interacts with LptA and the LptBFG transporter complex.

The protein localises to the cell inner membrane. Its function is as follows. Involved in the assembly of lipopolysaccharide (LPS). Required for the translocation of LPS from the inner membrane to the outer membrane. Facilitates the transfer of LPS from the inner membrane to the periplasmic protein LptA. Could be a docking site for LptA. This Escherichia coli O157:H7 protein is Lipopolysaccharide export system protein LptC.